Reading from the N-terminus, the 105-residue chain is UPF0145 protein jk0060 (105 aa).

The protein belongs to the UPF0145 family.

This Corynebacterium jeikeium (strain K411) protein is UPF0145 protein jk0060.